We begin with the raw amino-acid sequence, 376 residues long: Pregnancy-associated glycoprotein 2 (376 aa).

A signal peptide spans 1–15 (MKWLVLLGLVALSEC). Residues Asn51 and Asn71 are each glycosylated (N-linked (GlcNAc...) asparagine). A Peptidase A1 domain is found at 68–373 (YVGNITIGTP…DRKNRRIGLA (306 aa)). Asp86 is an active-site residue. A disulfide bond links Cys99 and Cys104. N-linked (GlcNAc...) asparagine glycosylation is found at Asn114, Asn248, and Asn252. Residues Cys258 and Cys262 are joined by a disulfide bond. Residue Asp267 is part of the active site. A disulfide bridge links Cys300 with Cys333. The N-linked (GlcNAc...) asparagine glycan is linked to Asn343.

It belongs to the peptidase A1 family. Post-translationally, N-Glycosylated; the glycans terminate in either N-acetyl-galactosamine (GalNAc) or N-acetyllactosamine. Terminal GalNAc on Asn-linked glycans is greatly reduced prior to parturition while lactosamine-type N-glycans remain unaltered. In terms of tissue distribution, trophoblast and placental tissue. Localized to both the mononucleate and binucleate cells of the trophectoderm.

Its subcellular location is the secreted. It localises to the extracellular space. In terms of biological role, PAG2 or a processed derivative of this molecule might represent a factor that binds the LH receptor. The sequence is that of Pregnancy-associated glycoprotein 2 (PAG2) from Bos taurus (Bovine).